Reading from the N-terminus, the 934-residue chain is 3-hydroxy-3-methylglutaryl-coenzyme A reductase (934 aa).

Over 1-111 (MFYHGASANQ…VLNLVRGAET (111 aa)) the chain is Lumenal. A helical transmembrane segment spans residues 112–132 (FDIALVTCAYIAMFYTLFNLF). One can recognise an SSD domain in the interval 113 to 280 (DIALVTCAYI…STFLSAILSL (168 aa)). Residues 133 to 141 (ARMRAVGSK) lie on the Cytoplasmic side of the membrane. The chain crosses the membrane as a helical span at residues 142–162 (VWLGLSTLVSSFFAFLFALYI). At 163-168 (TTRVLD) the chain is on the lumenal side. The helical transmembrane segment at 169-189 (LSIPFLSLSEGIPFFVAVVGF) threads the bilayer. Residues 190–231 (NNKILLAEKVLQNQLNAQSSKNDAPTVLYQALREQGPLLLRD) lie on the Cytoplasmic side of the membrane. Residues 232–252 (HLFMITAFLGCSFYASYLDGL) traverse the membrane as a helical segment. At 253-256 (KNFC) the chain is on the lumenal side. Residues 257–277 (ILAALILAFDILTTSTFLSAI) form a helical membrane-spanning segment. Residues 278 to 334 (LSLKLEINQIHRSTLLREQLEDDGLTETTVDDVLKSNSLAGTKTFTDAPSTLVTVAK) lie on the Cytoplasmic side of the membrane. The helical transmembrane segment at 335–355 (VAGVSVFFGLHFYGFGSAWLS) threads the bilayer. Over 356–421 (DLSAGNETND…GLISTAARDK (66 aa)) the chain is Lumenal. N-linked (GlcNAc...) asparagine glycosylation is found at Asn-361, Asn-364, and Asn-382. Residues 422-442 (YISKFILFAFAVSASINVYLL) form a helical membrane-spanning segment. Residues 443–934 (NVARIHTTRL…MQHNRAAAKK (492 aa)) lie on the Cytoplasmic side of the membrane. Glu-618 functions as the Charge relay system in the catalytic mechanism. 624–630 (SAMRGCK) serves as a coordination point for CoA. Residues 685 to 687 (SRF) and 712 to 720 (DAMGMNMIS) contribute to the NADP(+) site. The active-site Charge relay system is Lys-752. Residue 781-783 (VLK) participates in CoA binding. Asp-828 functions as the Charge relay system in the catalytic mechanism. A CoA-binding site is contributed by 923-924 (SH). The active-site Proton donor is His-924. 928-929 (NR) is an NADP(+) binding site.

The protein belongs to the HMG-CoA reductase family.

Its subcellular location is the endoplasmic reticulum membrane. The catalysed reaction is (R)-mevalonate + 2 NADP(+) + CoA = (3S)-3-hydroxy-3-methylglutaryl-CoA + 2 NADPH + 2 H(+). Its pathway is metabolic intermediate biosynthesis; (R)-mevalonate biosynthesis; (R)-mevalonate from acetyl-CoA: step 3/3. Functionally, HMG-CoA reductase; part of the first module of ergosterol biosynthesis pathway that includes the early steps of the pathway, conserved across all eukaryotes, and which results in the formation of mevalonate from acetyl-coenzyme A (acetyl-CoA). In this module, the cytosolic acetyl-CoA acetyltransferase catalyzes the formation of acetoacetyl-CoA. The hydroxymethylglutaryl-CoA synthase then condenses acetyl-CoA with acetoacetyl-CoA to form HMG-CoA. The rate-limiting step of the early module is the reduction to mevalonate by the 3-hydroxy-3-methylglutaryl-coenzyme A (HMG-CoA) reductase. The protein is 3-hydroxy-3-methylglutaryl-coenzyme A reductase of Cyberlindnera jadinii (Torula yeast).